A 344-amino-acid chain; its full sequence is Sulfate/thiosulfate import ATP-binding protein CysA (344 aa).

An ABC transporter domain is found at 3-237 (IEVRNLVKKF…PATAFVHGFI (235 aa)). 35–42 (GPSGSGKT) serves as a coordination point for ATP.

Belongs to the ABC transporter superfamily. Sulfate/tungstate importer (TC 3.A.1.6) family. As to quaternary structure, the complex is composed of two ATP-binding proteins (CysA), two transmembrane proteins (CysT and CysW) and a solute-binding protein (CysP).

The protein resides in the cell inner membrane. The enzyme catalyses sulfate(out) + ATP + H2O = sulfate(in) + ADP + phosphate + H(+). The catalysed reaction is thiosulfate(out) + ATP + H2O = thiosulfate(in) + ADP + phosphate + H(+). Its function is as follows. Part of the ABC transporter complex CysAWTP involved in sulfate/thiosulfate import. Responsible for energy coupling to the transport system. The sequence is that of Sulfate/thiosulfate import ATP-binding protein CysA from Bradyrhizobium diazoefficiens (strain JCM 10833 / BCRC 13528 / IAM 13628 / NBRC 14792 / USDA 110).